A 149-amino-acid polypeptide reads, in one-letter code: Nucleoside diphosphate kinase (149 aa).

ATP-binding residues include Lys-9, Phe-57, Arg-85, Thr-91, Arg-102, and Asn-112. His-115 (pros-phosphohistidine intermediate) is an active-site residue.

It belongs to the NDK family. Homotetramer. It depends on Mg(2+) as a cofactor.

It localises to the cytoplasm. It catalyses the reaction a 2'-deoxyribonucleoside 5'-diphosphate + ATP = a 2'-deoxyribonucleoside 5'-triphosphate + ADP. It carries out the reaction a ribonucleoside 5'-diphosphate + ATP = a ribonucleoside 5'-triphosphate + ADP. Major role in the synthesis of nucleoside triphosphates other than ATP. The ATP gamma phosphate is transferred to the NDP beta phosphate via a ping-pong mechanism, using a phosphorylated active-site intermediate. The polypeptide is Nucleoside diphosphate kinase (Heliobacterium modesticaldum (strain ATCC 51547 / Ice1)).